Here is a 344-residue protein sequence, read N- to C-terminus: Hyoscyamine 6-dioxygenase (344 aa).

The 101-residue stretch at 193 to 293 folds into the Fe2OG dioxygenase domain; sequence QIQMMLTNYY…RVSIATLIGP (101 aa). His-217, Asp-219, and His-274 together coordinate Fe cation. Arg-284 contributes to the 2-oxoglutarate binding site.

The protein belongs to the iron/ascorbate-dependent oxidoreductase family. Monomer. Fe(2+) serves as cofactor. L-ascorbate is required as a cofactor. The N-terminus is blocked. As to expression, root.

The catalysed reaction is L-hyoscyamine + 2-oxoglutarate + O2 = (6S)-6-hydroxyhyoscyamine + succinate + CO2. It participates in alkaloid biosynthesis; scopolamine biosynthesis. This Hyoscyamus niger (Black henbane) protein is Hyoscyamine 6-dioxygenase (H6H).